The following is a 253-amino-acid chain: Serine/threonine-protein phosphatase 3 (253 aa).

Mn(2+) is required as a cofactor. Post-translationally, phosphorylated by YegI.

The enzyme catalyses O-phospho-L-seryl-[protein] + H2O = L-seryl-[protein] + phosphate. The catalysed reaction is O-phospho-L-threonyl-[protein] + H2O = L-threonyl-[protein] + phosphate. With respect to regulation, activity dramatically decreases in the presence of the general protein phosphatase inhibitor sodium phosphate. Slightly inhibited by sodium fluoride. Activity decreases in the presence of the metal chelator EDTA. Its function is as follows. PP2C-like phosphatase that can dephosphorylate YegI. In vitro, can hydrolyze p-nitrophenyl phosphate (pNPP) to p-nitrophenol. This chain is Serine/threonine-protein phosphatase 3, found in Escherichia coli (strain K12).